The following is a 149-amino-acid chain: Large ribosomal subunit protein bL9 (149 aa).

The protein belongs to the bacterial ribosomal protein bL9 family.

Binds to the 23S rRNA. The protein is Large ribosomal subunit protein bL9 of Mycoplasma pneumoniae (strain ATCC 29342 / M129 / Subtype 1) (Mycoplasmoides pneumoniae).